The following is a 210-amino-acid chain: Putative 4-hydroxy-4-methyl-2-oxoglutarate aldolase (210 aa).

Substrate is bound by residues 87-90 and R109; that span reads GDFV. Residue D110 participates in a divalent metal cation binding.

Belongs to the class II aldolase/RraA-like family. Homotrimer. It depends on a divalent metal cation as a cofactor.

It carries out the reaction 4-hydroxy-4-methyl-2-oxoglutarate = 2 pyruvate. It catalyses the reaction oxaloacetate + H(+) = pyruvate + CO2. Catalyzes the aldol cleavage of 4-hydroxy-4-methyl-2-oxoglutarate (HMG) into 2 molecules of pyruvate. Also contains a secondary oxaloacetate (OAA) decarboxylase activity due to the common pyruvate enolate transition state formed following C-C bond cleavage in the retro-aldol and decarboxylation reactions. The chain is Putative 4-hydroxy-4-methyl-2-oxoglutarate aldolase from Halalkalibacterium halodurans (strain ATCC BAA-125 / DSM 18197 / FERM 7344 / JCM 9153 / C-125) (Bacillus halodurans).